The following is a 622-amino-acid chain: uncharacterized protein (622 aa).

Residues cysteine 302, cysteine 306, cysteine 310, and cysteine 521 each contribute to the [4Fe-4S] cluster site.

It belongs to the AOR/FOR family. The cofactor is [4Fe-4S] cluster.

This is an uncharacterized protein from Methanocaldococcus jannaschii (strain ATCC 43067 / DSM 2661 / JAL-1 / JCM 10045 / NBRC 100440) (Methanococcus jannaschii).